The chain runs to 190 residues: Nodulation protein L (190 aa).

The protein belongs to the transferase hexapeptide repeat family.

Its function is as follows. Acetyltransferase implicated in the O-acetylation of Nod factors. This Rhizobium leguminosarum bv. viciae protein is Nodulation protein L (nodL).